The primary structure comprises 186 residues: UPF0340 protein SZO_02480 (186 aa).

The protein belongs to the UPF0340 family.

The polypeptide is UPF0340 protein SZO_02480 (Streptococcus equi subsp. zooepidemicus (strain H70)).